We begin with the raw amino-acid sequence, 35 residues long: VNYGNGVSCSKTKCSVNWGIITHQAFRVTSGVASG.

It belongs to the bacteriocin class IIA/YGNGV family.

The protein resides in the secreted. Its function is as follows. Bacteriocin with antibacterial activity against C.jejuni. The polypeptide is Bacteriocin SRCAM 1580 (Niallia circulans (Bacillus circulans)).